A 176-amino-acid chain; its full sequence is ATP-dependent protease subunit HslV (176 aa).

Threonine 2 is a catalytic residue. Positions 158, 161, and 164 each coordinate Na(+).

This sequence belongs to the peptidase T1B family. HslV subfamily. A double ring-shaped homohexamer of HslV is capped on each side by a ring-shaped HslU homohexamer. The assembly of the HslU/HslV complex is dependent on binding of ATP.

The protein resides in the cytoplasm. It carries out the reaction ATP-dependent cleavage of peptide bonds with broad specificity.. With respect to regulation, allosterically activated by HslU binding. Functionally, protease subunit of a proteasome-like degradation complex believed to be a general protein degrading machinery. The protein is ATP-dependent protease subunit HslV of Pasteurella multocida (strain Pm70).